Reading from the N-terminus, the 25-residue chain is Xenoposin precursor fragment BM1 (25 aa).

As to expression, expressed by the skin glands.

Its subcellular location is the secreted. Functionally, antimicrobial peptide. This is Xenoposin precursor fragment BM1 from Xenopus boumbaensis (Mawa clawed frog).